The following is a 191-amino-acid chain: dCTP deaminase, dUMP-forming (191 aa).

DCTP-binding positions include 101-106, Asp-119, 127-129, Gln-148, Tyr-162, and Gln-174; these read KSSLGR and TLE. Glu-129 serves as the catalytic Proton donor/acceptor. Residues 163 to 191 form a disordered region; the sequence is GSPVYGSRYQGQRGPTPSRSWQNFHRTKI. Over residues 171-191 the composition is skewed to polar residues; that stretch reads YQGQRGPTPSRSWQNFHRTKI.

The protein belongs to the dCTP deaminase family. Homotrimer.

It catalyses the reaction dCTP + 2 H2O = dUMP + NH4(+) + diphosphate. Its pathway is pyrimidine metabolism; dUMP biosynthesis; dUMP from dCTP: step 1/1. Bifunctional enzyme that catalyzes both the deamination of dCTP to dUTP and the hydrolysis of dUTP to dUMP without releasing the toxic dUTP intermediate. This chain is dCTP deaminase, dUMP-forming, found in Acidothermus cellulolyticus (strain ATCC 43068 / DSM 8971 / 11B).